Reading from the N-terminus, the 948-residue chain is Phosphoenolpyruvate carboxylase (948 aa).

Catalysis depends on residues His-138 and Lys-610.

This sequence belongs to the PEPCase type 1 family. Mg(2+) is required as a cofactor.

The enzyme catalyses oxaloacetate + phosphate = phosphoenolpyruvate + hydrogencarbonate. Forms oxaloacetate, a four-carbon dicarboxylic acid source for the tricarboxylic acid cycle. This Streptococcus gordonii (strain Challis / ATCC 35105 / BCRC 15272 / CH1 / DL1 / V288) protein is Phosphoenolpyruvate carboxylase.